The following is a 539-amino-acid chain: Glucose-6-phosphate isomerase (539 aa).

The active-site Proton donor is glutamate 353. Catalysis depends on residues histidine 384 and lysine 505.

The protein belongs to the GPI family.

Its subcellular location is the cytoplasm. It catalyses the reaction alpha-D-glucose 6-phosphate = beta-D-fructose 6-phosphate. The protein operates within carbohydrate biosynthesis; gluconeogenesis. It participates in carbohydrate degradation; glycolysis; D-glyceraldehyde 3-phosphate and glycerone phosphate from D-glucose: step 2/4. In terms of biological role, catalyzes the reversible isomerization of glucose-6-phosphate to fructose-6-phosphate. The chain is Glucose-6-phosphate isomerase from Ralstonia pickettii (strain 12J).